The following is a 375-amino-acid chain: Flagellar P-ring protein (375 aa).

Positions 1-23 (MFNQSFLKYMLFGFFLFSFHAHA) are cleaved as a signal peptide.

The protein belongs to the FlgI family. In terms of assembly, the basal body constitutes a major portion of the flagellar organelle and consists of four rings (L,P,S, and M) mounted on a central rod.

The protein localises to the bacterial flagellum basal body. Its function is as follows. Assembles around the rod to form the L-ring and probably protects the motor/basal body from shearing forces during rotation. In Buchnera aphidicola subsp. Baizongia pistaciae (strain Bp), this protein is Flagellar P-ring protein.